Reading from the N-terminus, the 338-residue chain is Ketol-acid reductoisomerase (NADP(+)) (338 aa).

One can recognise a KARI N-terminal Rossmann domain in the interval 1–181 (MKVYYDKDAD…GGTKGGVIET (181 aa)). NADP(+)-binding positions include 24–27 (YGSQ), arginine 47, and serine 52. Residue histidine 107 is part of the active site. Glycine 133 is an NADP(+) binding site. The 146-residue stretch at 182–327 (NFREETETDL…GQLRDMMPWI (146 aa)) folds into the KARI C-terminal knotted domain. 4 residues coordinate Mg(2+): aspartate 190, glutamate 194, glutamate 226, and glutamate 230. Serine 251 is a substrate binding site.

The protein belongs to the ketol-acid reductoisomerase family. Mg(2+) serves as cofactor.

The catalysed reaction is (2R)-2,3-dihydroxy-3-methylbutanoate + NADP(+) = (2S)-2-acetolactate + NADPH + H(+). The enzyme catalyses (2R,3R)-2,3-dihydroxy-3-methylpentanoate + NADP(+) = (S)-2-ethyl-2-hydroxy-3-oxobutanoate + NADPH + H(+). It participates in amino-acid biosynthesis; L-isoleucine biosynthesis; L-isoleucine from 2-oxobutanoate: step 2/4. It functions in the pathway amino-acid biosynthesis; L-valine biosynthesis; L-valine from pyruvate: step 2/4. Functionally, involved in the biosynthesis of branched-chain amino acids (BCAA). Catalyzes an alkyl-migration followed by a ketol-acid reduction of (S)-2-acetolactate (S2AL) to yield (R)-2,3-dihydroxy-isovalerate. In the isomerase reaction, S2AL is rearranged via a Mg-dependent methyl migration to produce 3-hydroxy-3-methyl-2-ketobutyrate (HMKB). In the reductase reaction, this 2-ketoacid undergoes a metal-dependent reduction by NADPH to yield (R)-2,3-dihydroxy-isovalerate. This chain is Ketol-acid reductoisomerase (NADP(+)), found in Dechloromonas aromatica (strain RCB).